A 121-amino-acid polypeptide reads, in one-letter code: Large ribosomal subunit protein bL12 (121 aa).

Belongs to the bacterial ribosomal protein bL12 family. In terms of assembly, homodimer. Part of the ribosomal stalk of the 50S ribosomal subunit. Forms a multimeric L10(L12)X complex, where L10 forms an elongated spine to which 2 to 4 L12 dimers bind in a sequential fashion. Binds GTP-bound translation factors.

In terms of biological role, forms part of the ribosomal stalk which helps the ribosome interact with GTP-bound translation factors. Is thus essential for accurate translation. This chain is Large ribosomal subunit protein bL12, found in Aliivibrio salmonicida (strain LFI1238) (Vibrio salmonicida (strain LFI1238)).